The chain runs to 569 residues: Laccase-14 (569 aa).

Residues 1-33 (MEFKLNIPNTIIKTLQTIVFFLFVLLAFQIAEA) form the signal peptide. Plastocyanin-like domains lie at 41-157 (KIKS…PKRG) and 167-320 (REIP…YKGD). Residue Asn87 is glycosylated (N-linked (GlcNAc...) asparagine). Cu cation is bound by residues His91, His93, His136, and His138. N-linked (GlcNAc...) asparagine glycans are attached at residues Asn190, Asn249, Asn336, Asn374, Asn395, Asn430, and Asn452. In terms of domain architecture, Plastocyanin-like 3 spans 420 to 553 (DFPRNPPTKF…NTVFIVKDGP (134 aa)). Cu cation-binding residues include His470, His473, His475, His532, Cys533, His534, His538, and Met543.

The protein belongs to the multicopper oxidase family. Cu cation serves as cofactor. In terms of tissue distribution, expressed at low levels in flowers and siliques.

The protein resides in the secreted. It is found in the extracellular space. It localises to the apoplast. It catalyses the reaction 4 hydroquinone + O2 = 4 benzosemiquinone + 2 H2O. Functionally, lignin degradation and detoxification of lignin-derived products. The sequence is that of Laccase-14 (LAC14) from Arabidopsis thaliana (Mouse-ear cress).